The primary structure comprises 140 residues: FAD synthase (140 aa).

ATP is bound by residues 9-10, 14-17, N92, and Y119; these read TF and HPGH.

Belongs to the archaeal FAD synthase family. As to quaternary structure, homodimer. A divalent metal cation is required as a cofactor.

The enzyme catalyses FMN + ATP + H(+) = FAD + diphosphate. It participates in cofactor biosynthesis; FAD biosynthesis; FAD from FMN: step 1/1. Its function is as follows. Catalyzes the transfer of the AMP portion of ATP to flavin mononucleotide (FMN) to produce flavin adenine dinucleotide (FAD) coenzyme. This chain is FAD synthase, found in Methanocorpusculum labreanum (strain ATCC 43576 / DSM 4855 / Z).